A 248-amino-acid chain; its full sequence is MDFQSDLTREISPQRKLGRGKIEIKRIENTTNRQVTFCKRRNGLLKKAYELSVLCDAEVALIVFSSRGRLYEYANNSVKATIERYKKACSDSSNTGSISEANAQYYQQEASKLRAQIGNLQNQNRNMLGESLAALSLRDLKNLEQKIEKGISKIRSKKNELLFAEIEYMQKREIDLHNNNQYLRAKIAETERAQQQQQQQQMNLMPGSSSYELVPPPHQFDTRNYLQVNGLQTNNHYTRQDQPSLQLV.

One can recognise an MADS-box domain in the interval Arg-19–Tyr-73. The K-box domain occupies Ala-103–Ala-193. The segment at Gln-196–Gln-219 is disordered. Over residues Met-202–Tyr-211 the composition is skewed to polar residues.

The protein resides in the nucleus. In terms of biological role, probable transcription factor involved in regulating genes that determines stamen and carpel development in wild-type flowers. In Nicotiana tabacum (Common tobacco), this protein is Floral homeotic protein AGAMOUS (AG1).